The chain runs to 852 residues: Lon protease homolog 2, peroxisomal (852 aa).

Residue Ser2 is modified to N-acetylserine. The 210-residue stretch at 13-222 folds into the Lon N-terminal domain; the sequence is LPLLLTHEGV…MTIPLLVRQI (210 aa). 375–382 is an ATP binding site; the sequence is GPPGVGKT. The Lon proteolytic domain occupies 651 to 837; sequence LSQPGVAIGL…DEVLNAAFDG (187 aa). Catalysis depends on residues Ser743 and Lys786. A Microbody targeting signal motif is present at residues 850-852; that stretch reads SKL.

The protein belongs to the peptidase S16 family. Interacts with PEX5. Interacts with TYSND1. May interact with enzymes involved in beta-oxidation of fatty acids, including ACOX1/AOX.

It is found in the peroxisome matrix. It catalyses the reaction Hydrolysis of proteins in presence of ATP.. Its function is as follows. ATP-dependent serine protease that mediates the selective degradation of misfolded and unassembled polypeptides in the peroxisomal matrix. Necessary for type 2 peroxisome targeting signal (PTS2)-containing protein processing and facilitates peroxisome matrix protein import. May indirectly regulate peroxisomal fatty acid beta-oxidation through degradation of the self-processed forms of TYSND1. The chain is Lon protease homolog 2, peroxisomal from Bos taurus (Bovine).